Reading from the N-terminus, the 218-residue chain is Probable transaldolase (218 aa).

K87 (schiff-base intermediate with substrate) is an active-site residue.

The protein belongs to the transaldolase family. Type 3B subfamily.

Its subcellular location is the cytoplasm. The enzyme catalyses D-sedoheptulose 7-phosphate + D-glyceraldehyde 3-phosphate = D-erythrose 4-phosphate + beta-D-fructose 6-phosphate. The protein operates within carbohydrate degradation; pentose phosphate pathway; D-glyceraldehyde 3-phosphate and beta-D-fructose 6-phosphate from D-ribose 5-phosphate and D-xylulose 5-phosphate (non-oxidative stage): step 2/3. Functionally, transaldolase is important for the balance of metabolites in the pentose-phosphate pathway. This Bacteroides thetaiotaomicron (strain ATCC 29148 / DSM 2079 / JCM 5827 / CCUG 10774 / NCTC 10582 / VPI-5482 / E50) protein is Probable transaldolase.